The sequence spans 85 residues: ATP synthase subunit c (85 aa).

2 helical membrane passes run 10–30 and 53–73; these read IAVSIMIGLAALGTALGFGIL and FIVAGLIDAIAMIGVAVALLF.

This sequence belongs to the ATPase C chain family. As to quaternary structure, F-type ATPases have 2 components, F(1) - the catalytic core - and F(0) - the membrane proton channel. F(1) has five subunits: alpha(3), beta(3), gamma(1), delta(1), epsilon(1). F(0) has three main subunits: a(1), b(2) and c(10-14). The alpha and beta chains form an alternating ring which encloses part of the gamma chain. F(1) is attached to F(0) by a central stalk formed by the gamma and epsilon chains, while a peripheral stalk is formed by the delta and b chains.

The protein localises to the cell inner membrane. Functionally, f(1)F(0) ATP synthase produces ATP from ADP in the presence of a proton or sodium gradient. F-type ATPases consist of two structural domains, F(1) containing the extramembraneous catalytic core and F(0) containing the membrane proton channel, linked together by a central stalk and a peripheral stalk. During catalysis, ATP synthesis in the catalytic domain of F(1) is coupled via a rotary mechanism of the central stalk subunits to proton translocation. In terms of biological role, key component of the F(0) channel; it plays a direct role in translocation across the membrane. A homomeric c-ring of between 10-14 subunits forms the central stalk rotor element with the F(1) delta and epsilon subunits. The protein is ATP synthase subunit c of Idiomarina loihiensis (strain ATCC BAA-735 / DSM 15497 / L2-TR).